The sequence spans 379 residues: L-lactate dehydrogenase (379 aa).

Residues 1 to 379 enclose the FMN hydroxy acid dehydrogenase domain; it reads MIISASTDYR…IGRDSLVNLP (379 aa). Tyr24 serves as a coordination point for substrate. 2 residues coordinate FMN: Ser106 and Gln127. Tyr129 lines the substrate pocket. Thr155 is a binding site for FMN. Arg164 is a substrate binding site. Lys251 is an FMN binding site. The active-site Proton acceptor is His275. Residue Arg278 coordinates substrate. 306–330 contacts FMN; it reads DSGIRTGLDVVRMLALGADTVLLGR.

This sequence belongs to the FMN-dependent alpha-hydroxy acid dehydrogenase family. Requires FMN as cofactor.

The protein resides in the cell inner membrane. It catalyses the reaction (S)-lactate + A = pyruvate + AH2. In terms of biological role, catalyzes the conversion of L-lactate to pyruvate. Is coupled to the respiratory chain. The protein is L-lactate dehydrogenase of Stenotrophomonas maltophilia (strain R551-3).